Reading from the N-terminus, the 715-residue chain is 1,4-alpha-glucan branching enzyme GlgB (715 aa).

The active-site Nucleophile is the Asp396. Glu449 functions as the Proton donor in the catalytic mechanism.

The protein belongs to the glycosyl hydrolase 13 family. GlgB subfamily. As to quaternary structure, monomer.

The catalysed reaction is Transfers a segment of a (1-&gt;4)-alpha-D-glucan chain to a primary hydroxy group in a similar glucan chain.. It functions in the pathway glycan biosynthesis; glycogen biosynthesis. Catalyzes the formation of the alpha-1,6-glucosidic linkages in glycogen by scission of a 1,4-alpha-linked oligosaccharide from growing alpha-1,4-glucan chains and the subsequent attachment of the oligosaccharide to the alpha-1,6 position. The sequence is that of 1,4-alpha-glucan branching enzyme GlgB from Vibrio vulnificus (strain CMCP6).